We begin with the raw amino-acid sequence, 429 residues long: Trigger factor (429 aa).

A PPIase FKBP-type domain is found at 164 to 249 (GDTAVIDFEG…VKEVKTKVLP (86 aa)).

This sequence belongs to the FKBP-type PPIase family. Tig subfamily.

It is found in the cytoplasm. It catalyses the reaction [protein]-peptidylproline (omega=180) = [protein]-peptidylproline (omega=0). Functionally, involved in protein export. Acts as a chaperone by maintaining the newly synthesized protein in an open conformation. Functions as a peptidyl-prolyl cis-trans isomerase. This chain is Trigger factor, found in Lysinibacillus sphaericus (strain C3-41).